A 285-amino-acid polypeptide reads, in one-letter code: Protoheme IX farnesyltransferase (285 aa).

8 consecutive transmembrane segments (helical) span residues 19-39 (RIIW…GKLM), 40-60 (PLSI…SMII), 90-110 (AIYV…LDNP), 111-131 (LTSF…TVWL), 135-155 (SPLN…AGYA), 165-185 (SILL…ALAL), 220-240 (IPFA…VAGI), and 265-285 (FKFS…TRLI).

It belongs to the UbiA prenyltransferase family. Protoheme IX farnesyltransferase subfamily.

The protein localises to the cell membrane. The catalysed reaction is heme b + (2E,6E)-farnesyl diphosphate + H2O = Fe(II)-heme o + diphosphate. The protein operates within porphyrin-containing compound metabolism; heme O biosynthesis; heme O from protoheme: step 1/1. Converts heme B (protoheme IX) to heme O by substitution of the vinyl group on carbon 2 of heme B porphyrin ring with a hydroxyethyl farnesyl side group. This Metallosphaera sedula (strain ATCC 51363 / DSM 5348 / JCM 9185 / NBRC 15509 / TH2) protein is Protoheme IX farnesyltransferase.